The sequence spans 75 residues: uncharacterized protein (75 aa).

Positions 1 to 19 (MQCVCLCVFVLLLAGCVTS) are cleaved as a signal peptide.

In terms of tissue distribution, nacreous layer of shell (at protein level).

Its subcellular location is the secreted. This is an uncharacterized protein from Margaritifera margaritifera (Freshwater pearl mussel).